Consider the following 309-residue polypeptide: Probable manganese-dependent inorganic pyrophosphatase (309 aa).

Mn(2+) is bound by residues His-9, Asp-13, Asp-15, Asp-75, His-97, and Asp-149.

This sequence belongs to the PPase class C family. Mn(2+) is required as a cofactor.

It is found in the cytoplasm. The enzyme catalyses diphosphate + H2O = 2 phosphate + H(+). The polypeptide is Probable manganese-dependent inorganic pyrophosphatase (Bacillus mycoides (strain KBAB4) (Bacillus weihenstephanensis)).